We begin with the raw amino-acid sequence, 263 residues long: Hydroxyethylthiazole kinase (263 aa).

Met39 contributes to the substrate binding site. ATP-binding residues include Lys115 and Thr160. Residue Gly187 coordinates substrate.

This sequence belongs to the Thz kinase family. Mg(2+) is required as a cofactor.

It catalyses the reaction 5-(2-hydroxyethyl)-4-methylthiazole + ATP = 4-methyl-5-(2-phosphooxyethyl)-thiazole + ADP + H(+). Its pathway is cofactor biosynthesis; thiamine diphosphate biosynthesis; 4-methyl-5-(2-phosphoethyl)-thiazole from 5-(2-hydroxyethyl)-4-methylthiazole: step 1/1. Its function is as follows. Catalyzes the phosphorylation of the hydroxyl group of 4-methyl-5-beta-hydroxyethylthiazole (THZ). In Staphylococcus haemolyticus (strain JCSC1435), this protein is Hydroxyethylthiazole kinase.